Here is a 213-residue protein sequence, read N- to C-terminus: uncharacterized protein (213 aa).

An N-terminal signal peptide occupies residues 1-19; it reads MKKVLLLLFVLTIGLALSA. A lipid anchor (N-palmitoyl cysteine) is attached at Cys-20. Cys-20 is lipidated: S-diacylglycerol cysteine. Residues 20 to 62 are disordered; sequence CSQSSDASEKEKPKEKKSQEELEKELDKELKKGGEPKTKKDDQ. Positions 26-62 are enriched in basic and acidic residues; sequence ASEKEKPKEKKSQEELEKELDKELKKGGEPKTKKDDQ.

The protein localises to the cell membrane. This is an uncharacterized protein from Bacillus subtilis (strain 168).